Consider the following 327-residue polypeptide: Methionine import ATP-binding protein MetN (327 aa).

The 237-residue stretch at 3-239 (VELKNIEKIY…PKHAVTKELL (237 aa)) folds into the ABC transporter domain. Residue 36–43 (GYSGAGKS) participates in ATP binding.

Belongs to the ABC transporter superfamily. Methionine importer (TC 3.A.1.24) family. As to quaternary structure, the complex is composed of two ATP-binding proteins (MetN), two transmembrane proteins (MetI) and a solute-binding protein (MetQ).

The protein resides in the cell inner membrane. It carries out the reaction L-methionine(out) + ATP + H2O = L-methionine(in) + ADP + phosphate + H(+). The enzyme catalyses D-methionine(out) + ATP + H2O = D-methionine(in) + ADP + phosphate + H(+). Part of the ABC transporter complex MetNIQ involved in methionine import. Responsible for energy coupling to the transport system. The protein is Methionine import ATP-binding protein MetN of Helicobacter pylori (strain ATCC 700392 / 26695) (Campylobacter pylori).